A 242-amino-acid chain; its full sequence is MEKAYKILSVQENISHKKAKALIDSGLVSIGGKKLMVARKELPKNTHFSVQKVEKPSVIFEDENILALFKPPFIESYDLASFFKGWALLHRLDKETSGVVLLVKENSEFHLKAKKAFKDRAVKKEYLALTQGIIEEEREINAPILTFKTTKAFSKISKKGQEAVTIITPLKIINKKTLLKVGIKTGRTHQIRVHLKHINHPIIGDTLYNNEPSLAKRLMLHAHKIALLGYEFEAIAPKEFEI.

Residues 2–62 (EKAYKILSVQ…VEKPSVIFED (61 aa)) enclose the S4 RNA-binding domain. D93 is a catalytic residue.

This sequence belongs to the pseudouridine synthase RluA family.

It catalyses the reaction a uridine in RNA = a pseudouridine in RNA. This is an uncharacterized protein from Helicobacter pylori (strain ATCC 700392 / 26695) (Campylobacter pylori).